Consider the following 247-residue polypeptide: DNA polymerase sliding clamp (247 aa).

The protein belongs to the PCNA family. Homotrimer. The subunits circularize to form a toroid; DNA passes through its center. Replication factor C (RFC) is required to load the toroid on the DNA.

Its function is as follows. Sliding clamp subunit that acts as a moving platform for DNA processing. Responsible for tethering the catalytic subunit of DNA polymerase and other proteins to DNA during high-speed replication. The protein is DNA polymerase sliding clamp of Haloarcula marismortui (strain ATCC 43049 / DSM 3752 / JCM 8966 / VKM B-1809) (Halobacterium marismortui).